Reading from the N-terminus, the 169-residue chain is MQIETLTVEPLTKEAFAPFGDVIEVEGAQLRLINNGTTERYHDLARVEAAGTQTRVLINIFRGQSFAAPIDIMMMERHPFGSQAFIPLNGRPFLVVVAEDAGAGPARPRAFLARGDQGVNYLRNIWHHPLLALEQKSDFLVVDRAGREDNLEEYFFSDYAYRIETTQTA.

It belongs to the ureidoglycolate lyase family. Homodimer. Ni(2+) is required as a cofactor.

The catalysed reaction is (S)-ureidoglycolate = urea + glyoxylate. It participates in nitrogen metabolism; (S)-allantoin degradation. Functionally, catalyzes the catabolism of the allantoin degradation intermediate (S)-ureidoglycolate, generating urea and glyoxylate. Involved in the utilization of allantoin as nitrogen source. In Brucella ovis (strain ATCC 25840 / 63/290 / NCTC 10512), this protein is Ureidoglycolate lyase.